An 849-amino-acid chain; its full sequence is Period circadian protein (849 aa).

The segment covering 1–13 (MNNMDGSENNAKV) has biased composition (polar residues). Positions 1-79 (MNNMDGSENN…LKKKKQVETL (79 aa)) are disordered. 2 stretches are compositionally biased toward low complexity: residues 14 to 27 (SDSA…NSQS) and 35 to 58 (STHS…SSSS). The Nuclear localization signal motif lies at 63-74 (DQKKEKELKKKK). 2 consecutive PAS domains span residues 166 to 296 (NGFS…QAVP) and 314 to 416 (FVIR…YIIE). The interval 680–746 (NNTPSVYEKP…VSTSSQWSSS (67 aa)) is disordered. Positions 706 to 720 (NKHHCPSSRQFRRKQ) are enriched in basic residues. The segment covering 735 to 746 (NPVSTSSQWSSS) has biased composition (low complexity).

Forms a heterodimer with timeless (TIM); the complex then translocates into the nucleus. Post-translationally, phosphorylated with a circadian rhythmicity.

The protein localises to the nucleus. Its function is as follows. Involved in the generation of biological rhythms. The biological cycle depends on the rhythmic formation and nuclear localization of the tim-per complex. Light induces the degradation of tim, which promotes elimination of per. Nuclear activity of the heterodimer coordinatively regulates per and tim transcription negative feedback loop. Behaves as a negative element in circadian transcriptional loop. Does not appear to bind DNA, suggesting indirect transcriptional inhibition. Expression exhibits prominent circadian variation in adult heads and in particular in the photoreceptor nuclei. The chain is Period circadian protein (per) from Antheraea pernyi (Chinese oak silk moth).